Reading from the N-terminus, the 188-residue chain is ADP-ribosylation factor K (188 aa).

Residues 34–40 (DGAGKST), 75–79 (DVGGQ), and 134–137 (NKQD) contribute to the GTP site.

The protein belongs to the small GTPase superfamily. Arf family.

It is found in the golgi apparatus. Functionally, GTP-binding protein that may be involved in protein trafficking. May modulate vesicle budding and uncoating within the Golgi apparatus. This is ADP-ribosylation factor K (arrK) from Dictyostelium discoideum (Social amoeba).